A 699-amino-acid chain; its full sequence is Elongation factor G 1 (699 aa).

Positions 8 to 290 (ERYRNIGICA…AVIEYLPSPT (283 aa)) constitute a tr-type G domain. GTP is bound by residues 17 to 24 (AHVDAGKT), 88 to 92 (DTPGH), and 142 to 145 (NKMD).

It belongs to the TRAFAC class translation factor GTPase superfamily. Classic translation factor GTPase family. EF-G/EF-2 subfamily.

The protein resides in the cytoplasm. Functionally, catalyzes the GTP-dependent ribosomal translocation step during translation elongation. During this step, the ribosome changes from the pre-translocational (PRE) to the post-translocational (POST) state as the newly formed A-site-bound peptidyl-tRNA and P-site-bound deacylated tRNA move to the P and E sites, respectively. Catalyzes the coordinated movement of the two tRNA molecules, the mRNA and conformational changes in the ribosome. The chain is Elongation factor G 1 from Hahella chejuensis (strain KCTC 2396).